The chain runs to 222 residues: Octanoyltransferase (222 aa).

One can recognise a BPL/LPL catalytic domain in the interval 34–214; sequence GEAPSTVLLL…EFRKHEEALV (181 aa). Residues 72 to 79, 144 to 146, and 157 to 159 contribute to the substrate site; these read RGGKLTWH, AIG, and GVA. Cys-175 (acyl-thioester intermediate) is an active-site residue.

The protein belongs to the LipB family.

It localises to the cytoplasm. The enzyme catalyses octanoyl-[ACP] + L-lysyl-[protein] = N(6)-octanoyl-L-lysyl-[protein] + holo-[ACP] + H(+). It functions in the pathway protein modification; protein lipoylation via endogenous pathway; protein N(6)-(lipoyl)lysine from octanoyl-[acyl-carrier-protein]: step 1/2. In terms of biological role, catalyzes the transfer of endogenously produced octanoic acid from octanoyl-acyl-carrier-protein onto the lipoyl domains of lipoate-dependent enzymes. Lipoyl-ACP can also act as a substrate although octanoyl-ACP is likely to be the physiological substrate. This chain is Octanoyltransferase, found in Pseudarthrobacter chlorophenolicus (strain ATCC 700700 / DSM 12829 / CIP 107037 / JCM 12360 / KCTC 9906 / NCIMB 13794 / A6) (Arthrobacter chlorophenolicus).